Here is a 261-residue protein sequence, read N- to C-terminus: Type II restriction enzyme Sau96I (261 aa).

As to quaternary structure, monomer.

The catalysed reaction is Endonucleolytic cleavage of DNA to give specific double-stranded fragments with terminal 5'-phosphates.. In terms of biological role, a P subtype restriction enzyme that recognizes the double-stranded sequence 5'-GGNCC-3' and cleaves after G-1. The sequence is that of Type II restriction enzyme Sau96I from Staphylococcus aureus.